A 249-amino-acid polypeptide reads, in one-letter code: 23S rRNA (guanosine-2'-O-)-methyltransferase RlmB (249 aa).

3 residues coordinate S-adenosyl-L-methionine: Gly-197, Ile-217, and Leu-226.

It belongs to the class IV-like SAM-binding methyltransferase superfamily. RNA methyltransferase TrmH family. RlmB subfamily.

It localises to the cytoplasm. It carries out the reaction guanosine(2251) in 23S rRNA + S-adenosyl-L-methionine = 2'-O-methylguanosine(2251) in 23S rRNA + S-adenosyl-L-homocysteine + H(+). Its function is as follows. Specifically methylates the ribose of guanosine 2251 in 23S rRNA. This chain is 23S rRNA (guanosine-2'-O-)-methyltransferase RlmB, found in Ralstonia nicotianae (strain ATCC BAA-1114 / GMI1000) (Ralstonia solanacearum).